The chain runs to 385 residues: Glucans biosynthesis protein C (385 aa).

10 helical membrane-spanning segments follow: residues 17–37 (AWLM…SHTW), 60–80 (MLVF…RYPL), 91–111 (VGIP…IMLQ), 137–157 (ISHL…VWIF), 173–193 (KFSM…YAVI), 212–232 (FIVM…LAFI), 239–259 (LFTT…VAYL), 274–294 (TESV…FSFG), 311–331 (ASLF…AYIT), and 338–358 (WLGF…LYEI).

Belongs to the acyltransferase 3 family. OpgC subfamily.

Its subcellular location is the cell membrane. It participates in glycan metabolism; osmoregulated periplasmic glucan (OPG) biosynthesis. Its function is as follows. Necessary for the succinyl substitution of periplasmic glucans. Could catalyze the transfer of succinyl residues from the cytoplasmic side of the membrane to the nascent glucan backbones on the periplasmic side of the membrane. In Shigella boydii serotype 4 (strain Sb227), this protein is Glucans biosynthesis protein C.